The sequence spans 451 residues: Chromosomal replication initiator protein DnaA (451 aa).

The domain I, interacts with DnaA modulators stretch occupies residues 1–71; sequence MSEKEIWDKV…QAIIYDVIGY (71 aa). Positions 71 to 112 are domain II; sequence YEVKPHFISEDELASYNNVNTQEVQEPQVQHSSIDDKTWGKE. Residues 113–329 form a domain III, AAA+ region region; sequence QFNMHNTFDT…GALTRLLAYS (217 aa). ATP is bound by residues glycine 157, glycine 159, lysine 160, and threonine 161. Residues 330-451 form a domain IV, binds dsDNA region; sequence KLQGKPITTE…ENLEKEIRNQ (122 aa).

This sequence belongs to the DnaA family. As to quaternary structure, oligomerizes as a right-handed, spiral filament on DNA at oriC.

It is found in the cytoplasm. Functionally, plays an essential role in the initiation and regulation of chromosomal replication. ATP-DnaA binds to the origin of replication (oriC) to initiate formation of the DNA replication initiation complex once per cell cycle. Binds the DnaA box (a 9 base pair repeat at the origin) and separates the double-stranded (ds)DNA. Forms a right-handed helical filament on oriC DNA; dsDNA binds to the exterior of the filament while single-stranded (ss)DNA is stabiized in the filament's interior. The ATP-DnaA-oriC complex binds and stabilizes one strand of the AT-rich DNA unwinding element (DUE), permitting loading of DNA polymerase. After initiation quickly degrades to an ADP-DnaA complex that is not apt for DNA replication. Binds acidic phospholipids. This Staphylococcus epidermidis (strain ATCC 12228 / FDA PCI 1200) protein is Chromosomal replication initiator protein DnaA.